Here is a 369-residue protein sequence, read N- to C-terminus: MVKLPAISKKPREIAKQKIIELAKKMYEDLMKGKRPKITMPIRSLSNAMFDKEKGSFTLVGKEKARTLTVNQAKIFAQTTKMLEFAKQLLETDDFSTLREAYYVSKNWGEARFDDQQASNNVIEDLEAALGVLREHLGFIPEEDGSSVVGPLKIIEETPEGELVVDCTKLGTGAYNIPNDVTKLNLETDADFILAIETSGMFARLNAERFWDKHNCILVSLKGVPARATRRFIKRLHEEHDLPVLVFTDGDPYGYLNIYRTLKVGSGKAIHLADKLSIPAARLIGVTPQDIIDYDLPTHPLKEQDIKRIKDGLKNDDFVRSFPEWQKALKQMLDMGVRAEQQSLAKYGLKYVVNTYLPEKIKDESTWLP.

One can recognise a Topo IIA-type catalytic domain in the interval 10–146 (KPREIAKQKI…LGFIPEEDGS (137 aa)). Y103 serves as the catalytic O-(5'-phospho-DNA)-tyrosine intermediate. Mg(2+) contacts are provided by E197 and D249.

It belongs to the TOP6A family. As to quaternary structure, homodimer. Heterotetramer of two Top6A and two Top6B chains. Mg(2+) is required as a cofactor.

The catalysed reaction is ATP-dependent breakage, passage and rejoining of double-stranded DNA.. In terms of biological role, relaxes both positive and negative superturns and exhibits a strong decatenase activity. This chain is Type 2 DNA topoisomerase 6 subunit A, found in Methanocaldococcus jannaschii (strain ATCC 43067 / DSM 2661 / JAL-1 / JCM 10045 / NBRC 100440) (Methanococcus jannaschii).